A 207-amino-acid chain; its full sequence is Guanylate kinase (207 aa).

Positions 4 to 184 constitute a Guanylate kinase-like domain; it reads GTLYIVSAPS…ALTDLKTIIR (181 aa). ATP is bound at residue 11–18; it reads APSGAGKS.

The protein belongs to the guanylate kinase family.

The protein localises to the cytoplasm. The catalysed reaction is GMP + ATP = GDP + ADP. Its function is as follows. Essential for recycling GMP and indirectly, cGMP. The protein is Guanylate kinase of Escherichia coli O6:K15:H31 (strain 536 / UPEC).